The chain runs to 269 residues: Putative pyruvate, phosphate dikinase regulatory protein (269 aa).

Residue glycine 153–threonine 160 participates in ADP binding.

This sequence belongs to the pyruvate, phosphate/water dikinase regulatory protein family. PDRP subfamily.

The enzyme catalyses N(tele)-phospho-L-histidyl/L-threonyl-[pyruvate, phosphate dikinase] + ADP = N(tele)-phospho-L-histidyl/O-phospho-L-threonyl-[pyruvate, phosphate dikinase] + AMP + H(+). It carries out the reaction N(tele)-phospho-L-histidyl/O-phospho-L-threonyl-[pyruvate, phosphate dikinase] + phosphate + H(+) = N(tele)-phospho-L-histidyl/L-threonyl-[pyruvate, phosphate dikinase] + diphosphate. Its function is as follows. Bifunctional serine/threonine kinase and phosphorylase involved in the regulation of the pyruvate, phosphate dikinase (PPDK) by catalyzing its phosphorylation/dephosphorylation. The polypeptide is Putative pyruvate, phosphate dikinase regulatory protein (Pediococcus pentosaceus (strain ATCC 25745 / CCUG 21536 / LMG 10740 / 183-1w)).